Consider the following 390-residue polypeptide: Oxygen-dependent coproporphyrinogen-III oxidase (390 aa).

Residues 131 to 140 (VLQDGDVFEK) form an important for dimerization region. Residue Ser181 coordinates substrate. His195 functions as the Proton donor in the catalytic mechanism. Substrate-binding positions include 197 to 199 (NYR) and 348 to 353 (GARYES). An important for dimerization region spans residues 329-365 (YVEFNLIYDRGTKFGLYTPGARYESILMSLPLHARWE).

The protein belongs to the aerobic coproporphyrinogen-III oxidase family. As to quaternary structure, homodimer.

The enzyme catalyses coproporphyrinogen III + O2 + 2 H(+) = protoporphyrinogen IX + 2 CO2 + 2 H2O. Its pathway is porphyrin-containing compound metabolism; protoporphyrin-IX biosynthesis; protoporphyrinogen-IX from coproporphyrinogen-III (O2 route): step 1/1. Its function is as follows. Involved in the heme biosynthesis. Catalyzes the aerobic oxidative decarboxylation of propionate groups of rings A and B of coproporphyrinogen-III to yield the vinyl groups in protoporphyrinogen-IX. The chain is Oxygen-dependent coproporphyrinogen-III oxidase (Coprox) from Drosophila melanogaster (Fruit fly).